A 272-amino-acid chain; its full sequence is Indole-3-glycerol phosphate synthase (272 aa).

The protein belongs to the TrpC family.

It carries out the reaction 1-(2-carboxyphenylamino)-1-deoxy-D-ribulose 5-phosphate + H(+) = (1S,2R)-1-C-(indol-3-yl)glycerol 3-phosphate + CO2 + H2O. It functions in the pathway amino-acid biosynthesis; L-tryptophan biosynthesis; L-tryptophan from chorismate: step 4/5. The protein is Indole-3-glycerol phosphate synthase of Paenarthrobacter aurescens (strain TC1).